Consider the following 593-residue polypeptide: tRNA (guanine(26)-N(2))-dimethyltransferase 1 (593 aa).

One can recognise a Trm1 methyltransferase domain in the interval Thr9–Met465. Arg36 provides a ligand contact to S-adenosyl-L-methionine. Positions Ala56 to Glu118 are disordered. Composition is skewed to basic and acidic residues over residues Val68–Thr81 and Asp88–Glu118. The S-adenosyl-L-methionine site is built by Arg134, Asp152, and Val185. Zn(2+)-binding residues include Cys315, Cys318, Cys350, and Cys353. Residues Val546–Ser593 form a disordered region. Residues Gly558–Glu577 show a composition bias toward acidic residues. The segment covering Pro578–Glu587 has biased composition (basic and acidic residues).

The protein belongs to the class I-like SAM-binding methyltransferase superfamily. Trm1 family.

It carries out the reaction guanosine(26) in tRNA + 2 S-adenosyl-L-methionine = N(2)-dimethylguanosine(26) in tRNA + 2 S-adenosyl-L-homocysteine + 2 H(+). Its function is as follows. Dimethylates a single guanine residue at position 26 of most tRNAs using S-adenosyl-L-methionine as donor of the methyl groups. The protein is tRNA (guanine(26)-N(2))-dimethyltransferase 1 of Arabidopsis thaliana (Mouse-ear cress).